Here is a 386-residue protein sequence, read N- to C-terminus: 17-hydroxy-3-oxo-4-pregnene-20-carboxyl-CoA lyase (386 aa).

Catalysis depends on Y292, which acts as the Proton acceptor. Y342 serves as the catalytic Proton donor.

This sequence belongs to the thiolase-like superfamily. In terms of assembly, homodimer. Interacts with the ChsH1/ChsH2 hydratase via the DUF35 C-terminal region of ChsH2 (ChsH2-DUF35). The ChsH1-ChsH2-Ltp2 protein complex is composed of two protomers that form a heterohexameric structure through the Ltp2 dimerization interface.

The enzyme catalyses 17-hydroxy-3-oxochol-4-en-22-oyl-CoA = androst-4-ene-3,17-dione + propanoyl-CoA. The protein operates within steroid metabolism; cholesterol degradation. In terms of biological role, involved in cholesterol side chain degradation. When associated with the ChsH1/ChsH2 hydratase, catalyzes the retroaldol cleavage of 17-hydroxy-3-oxo-4-pregnene-20-carboxyl-CoA (17-HOPC-CoA) produced by the hydratase, forming androst-4-ene-3,17-dione and propionyl-CoA. This Mycobacterium tuberculosis (strain ATCC 25618 / H37Rv) protein is 17-hydroxy-3-oxo-4-pregnene-20-carboxyl-CoA lyase.